The primary structure comprises 449 residues: Phosphoglucosamine mutase (449 aa).

Catalysis depends on S103, which acts as the Phosphoserine intermediate. S103, D240, D242, and D244 together coordinate Mg(2+). S103 is subject to Phosphoserine.

The protein belongs to the phosphohexose mutase family. It depends on Mg(2+) as a cofactor. Activated by phosphorylation.

The catalysed reaction is alpha-D-glucosamine 1-phosphate = D-glucosamine 6-phosphate. Functionally, catalyzes the conversion of glucosamine-6-phosphate to glucosamine-1-phosphate. The protein is Phosphoglucosamine mutase of Thermobifida fusca (strain YX).